The chain runs to 1009 residues: Protein-tyrosine kinase 2-beta (1009 aa).

The 321-residue stretch at 39 to 359 (RILKVCFYSN…GYCRLQGEHQ (321 aa)) folds into the FERM domain. Ser361, Ser375, and Ser399 each carry phosphoserine. Phosphotyrosine; by autocatalysis is present on Tyr402. Residues 425 to 683 (VVLNRILGEG…ELVCSLSDVY (259 aa)) enclose the Protein kinase domain. ATP is bound by residues 431–439 (LGEGFFGEV), Lys457, and 503–509 (ELYPYGE). Asp549 (proton acceptor) is an active-site residue. Tyr579 carries the phosphotyrosine modification. Residue Tyr580 is modified to Phosphotyrosine; by SRC, FYN and LCK. Residues 701-725 (TPKILEPTAFQEPPPKPSRPKYRPP) form a disordered region. The segment covering 712-725 (EPPPKPSRPKYRPP) has biased composition (pro residues). Tyr722 bears the Phosphotyrosine mark. Phosphoserine is present on Ser762. The residue at position 765 (Thr765) is a Phosphothreonine. The interval 801-1009 (KVKMRQILDK…LANLAHPPAE (209 aa)) is interaction with TGFB1I1. Tyr819 and Tyr834 each carry phosphotyrosine. Ser839 bears the Phosphoserine mark. Position 842 is a phosphothreonine (Thr842). Tyr849 is subject to Phosphotyrosine. Ser866 is modified (phosphoserine). The segment at 868 to 1009 (QPTANLDRTD…LANLAHPPAE (142 aa)) is focal adhesion targeting (FAT). At Tyr881 the chain carries Phosphotyrosine; by SRC.

It belongs to the protein kinase superfamily. Tyr protein kinase family. FAK subfamily. As to quaternary structure, homodimer, or homooligomer. Interacts with SIRPA and SH2D3C. Interacts with ARHGAP10. Interacts with DLG4. Interacts with KCNA2. Interacts with NPHP1, ASAP1, ASAP2, ARHGAP26, SKAP2 and TGFB1I1. The Tyr-402 phosphorylated form interacts with SRC (via SH2 domain) and SRC family members. Forms a signaling complex with EPHA1, LCK and phosphatidylinositol 3-kinase; upon activation by EFNA1. Interacts with GRB2 (via SH2 domain). Interacts with P53/TP53 and MDM2. Interacts with MYLK. Interacts with BCAR1. Interacts with PDPK1. Interacts (hypophosphorylated) with PXN. Interacts with RB1CC1. Interacts with RHOU. Interacts with VAV1. Interacts with LPXN and PTPN12. In terms of processing, phosphorylated on tyrosine residues in response to various stimuli that elevate the intracellular calcium concentration; this activation is indirect and may be mediated by production of reactive oxygen species (ROS). Tyr-402 is the major autophosphorylation site, but other kinases can also phosphorylate Tyr-402. Autophosphorylation occurs in trans, i.e. one subunit of the dimeric receptor phosphorylates tyrosine residues on the other subunit. Phosphorylation at Tyr-402 promotes interaction with SRC and SRC family members, leading to phosphorylation at Tyr-579; Tyr-580 and Tyr-881. Phosphorylation at Tyr-881 is important for interaction with GRB2. Phosphorylated on tyrosine residues upon activation of FGR and PKC. Recruitment by NPHP1 to cell matrix adhesions initiates Tyr-402 phosphorylation. In monocytes, adherence to substrata is required for tyrosine phosphorylation and kinase activation. Angiotensin II, thapsigargin and L-alpha-lysophosphatidic acid (LPA) also induce autophosphorylation and increase kinase activity. Phosphorylation by MYLK promotes ITGB2 activation and is thus essential to trigger neutrophil transmigration during lung injury. Dephosphorylated by PTPN12. In terms of tissue distribution, most abundant in the brain, with highest levels in amygdala and hippocampus. Low levels in kidney (at protein level). Also expressed in spleen and lymphocytes.

The protein localises to the cytoplasm. It is found in the perinuclear region. Its subcellular location is the cell membrane. The protein resides in the cell junction. It localises to the focal adhesion. The protein localises to the cell projection. It is found in the lamellipodium. Its subcellular location is the cell cortex. The protein resides in the nucleus. The enzyme catalyses L-tyrosyl-[protein] + ATP = O-phospho-L-tyrosyl-[protein] + ADP + H(+). With respect to regulation, activated in response to stimuli that lead to increased intracellular Ca(2+) levels; this activation is indirect and may be mediated by calcium-mediated production of reactive oxygen species (ROS). Activated by autophosphorylation at Tyr-402; this creates a binding site for SRC family kinases and leads to phosphorylation at additional tyrosine residues. Phosphorylation at Tyr-402, Tyr-579 and Tyr-580 is required for optimal kinase activity. Inhibited by PF-562,271, BIRB796, PF-4618433 and by PF-431396, PF-2318841 and their derivatives. Inhibited by sulfoximine-substituted trifluoromethylpyrimidines. Inhibited by 4-amino and 5-aryl substituted pyridinone compounds. Non-receptor protein-tyrosine kinase that regulates reorganization of the actin cytoskeleton, cell polarization, cell migration, adhesion, spreading and bone remodeling. Plays a role in the regulation of the humoral immune response, and is required for normal levels of marginal B-cells in the spleen and normal migration of splenic B-cells. Required for normal macrophage polarization and migration towards sites of inflammation. Regulates cytoskeleton rearrangement and cell spreading in T-cells, and contributes to the regulation of T-cell responses. Promotes osteoclastic bone resorption; this requires both PTK2B/PYK2 and SRC. May inhibit differentiation and activity of osteoprogenitor cells. Functions in signaling downstream of integrin and collagen receptors, immune receptors, G-protein coupled receptors (GPCR), cytokine, chemokine and growth factor receptors, and mediates responses to cellular stress. Forms multisubunit signaling complexes with SRC and SRC family members upon activation; this leads to the phosphorylation of additional tyrosine residues, creating binding sites for scaffold proteins, effectors and substrates. Regulates numerous signaling pathways. Promotes activation of phosphatidylinositol 3-kinase and of the AKT1 signaling cascade. Promotes activation of NOS3. Regulates production of the cellular messenger cGMP. Promotes activation of the MAP kinase signaling cascade, including activation of MAPK1/ERK2, MAPK3/ERK1 and MAPK8/JNK1. Promotes activation of Rho family GTPases, such as RHOA and RAC1. Recruits the ubiquitin ligase MDM2 to P53/TP53 in the nucleus, and thereby regulates P53/TP53 activity, P53/TP53 ubiquitination and proteasomal degradation. Acts as a scaffold, binding to both PDPK1 and SRC, thereby allowing SRC to phosphorylate PDPK1 at 'Tyr-9, 'Tyr-373', and 'Tyr-376'. Promotes phosphorylation of NMDA receptors by SRC family members, and thereby contributes to the regulation of NMDA receptor ion channel activity and intracellular Ca(2+) levels. May also regulate potassium ion transport by phosphorylation of potassium channel subunits. Phosphorylates SRC; this increases SRC kinase activity. Phosphorylates ASAP1, NPHP1, KCNA2 and SHC1. Promotes phosphorylation of ASAP2, RHOU and PXN; this requires both SRC and PTK2/PYK2. The polypeptide is Protein-tyrosine kinase 2-beta (PTK2B) (Homo sapiens (Human)).